The primary structure comprises 426 residues: Protein FAM181B (426 aa).

Disordered stretches follow at residues Gly106 to Ala157 and Asn226 to Ser246. Low complexity predominate over residues Pro128 to Ala141.

The protein belongs to the FAM181 family.

In Homo sapiens (Human), this protein is Protein FAM181B (FAM181B).